Consider the following 88-residue polypeptide: Small ribosomal subunit protein bS20 (88 aa).

The segment at 1-27 (MANTASAKKMTRKIAKRTAINRSRRSR) is disordered.

This sequence belongs to the bacterial ribosomal protein bS20 family.

In terms of biological role, binds directly to 16S ribosomal RNA. The chain is Small ribosomal subunit protein bS20 from Methylobacterium radiotolerans (strain ATCC 27329 / DSM 1819 / JCM 2831 / NBRC 15690 / NCIMB 10815 / 0-1).